The primary structure comprises 155 residues: Small ribosomal subunit protein uS7 (155 aa).

The protein belongs to the universal ribosomal protein uS7 family. Part of the 30S ribosomal subunit. Contacts proteins S9 and S11.

In terms of biological role, one of the primary rRNA binding proteins, it binds directly to 16S rRNA where it nucleates assembly of the head domain of the 30S subunit. Is located at the subunit interface close to the decoding center, probably blocks exit of the E-site tRNA. The sequence is that of Small ribosomal subunit protein uS7 from Thermotoga maritima (strain ATCC 43589 / DSM 3109 / JCM 10099 / NBRC 100826 / MSB8).